The following is a 245-amino-acid chain: Balbiani ring A 28 kDa protein (245 aa).

The N-terminal stretch at 1–16 is a signal peptide; that stretch reads MKSIIKHILFVVLLIS. Residues serine 33, serine 40, serine 92, serine 93, and serine 115 each carry the phosphoserine modification.

As to expression, salivary gland.

It is found in the secreted. In terms of biological role, used by the larvae to construct a supramolecular structure, the larval tube. This Chironomus thummi thummi (Midge) protein is Balbiani ring A 28 kDa protein.